The chain runs to 259 residues: Acyl-[acyl-carrier-protein]--UDP-N-acetylglucosamine O-acyltransferase (259 aa).

It belongs to the transferase hexapeptide repeat family. LpxA subfamily. In terms of assembly, homotrimer.

The protein localises to the cytoplasm. It catalyses the reaction a (3R)-hydroxyacyl-[ACP] + UDP-N-acetyl-alpha-D-glucosamine = a UDP-3-O-[(3R)-3-hydroxyacyl]-N-acetyl-alpha-D-glucosamine + holo-[ACP]. The protein operates within glycolipid biosynthesis; lipid IV(A) biosynthesis; lipid IV(A) from (3R)-3-hydroxytetradecanoyl-[acyl-carrier-protein] and UDP-N-acetyl-alpha-D-glucosamine: step 1/6. Functionally, involved in the biosynthesis of lipid A, a phosphorylated glycolipid that anchors the lipopolysaccharide to the outer membrane of the cell. The polypeptide is Acyl-[acyl-carrier-protein]--UDP-N-acetylglucosamine O-acyltransferase (Psychrobacter arcticus (strain DSM 17307 / VKM B-2377 / 273-4)).